Reading from the N-terminus, the 156-residue chain is RING finger protein 224 (156 aa).

The RING-type zinc finger occupies 23-70 (CIICYSAYDLSVHLPRRLYCGHTFCQACMQRLDMPAHEQHWIPCPQCR).

This is RING finger protein 224 (Rnf224) from Mus musculus (Mouse).